The sequence spans 325 residues: Short chain isoprenyl diphosphate synthase (325 aa).

Positions 44, 47, and 76 each coordinate isopentenyl diphosphate. Residues Asp83 and Asp87 each contribute to the Mg(2+) site. Arg92 is an an all-trans-polyprenyl diphosphate binding site. Isopentenyl diphosphate is bound at residue Arg93. An all-trans-polyprenyl diphosphate contacts are provided by Lys173, Thr174, Gln211, Lys228, and Lys238.

It belongs to the FPP/GGPP synthase family. As to quaternary structure, homodimer. It depends on Mg(2+) as a cofactor.

It localises to the cytoplasm. This Methanothermobacter thermautotrophicus (strain ATCC 29096 / DSM 1053 / JCM 10044 / NBRC 100330 / Delta H) (Methanobacterium thermoautotrophicum) protein is Short chain isoprenyl diphosphate synthase (idsA).